Reading from the N-terminus, the 55-residue chain is Spermatid nuclear transition protein 1 (55 aa).

Residues 1-42 show a composition bias toward basic residues; that stretch reads MSTSRKLKTHGMRRGKNRAPHKGVKRGGSKRKYRKSSLKSRK. Residues 1–55 form a disordered region; sequence MSTSRKLKTHGMRRGKNRAPHKGVKRGGSKRKYRKSSLKSRKRGDDASRNYRSHL. A phosphoserine mark is found at serine 36, serine 37, and serine 40.

This sequence belongs to the nuclear transition protein 1 family. As to expression, testis.

The protein localises to the nucleus. The protein resides in the chromosome. Its function is as follows. Plays a key role in the replacement of histones to protamine in the elongating spermatids of mammals. In condensing spermatids, loaded onto the nucleosomes, where it promotes the recruitment and processing of protamines, which are responsible for histone eviction. The polypeptide is Spermatid nuclear transition protein 1 (Tnp1) (Rattus norvegicus (Rat)).